We begin with the raw amino-acid sequence, 314 residues long: DNA-directed RNA polymerase subunit alpha (314 aa).

The alpha N-terminal domain (alpha-NTD) stretch occupies residues 1-228; sequence MIEFEKPNIH…DHLSIFVNLT (228 aa). The alpha C-terminal domain (alpha-CTD) stretch occupies residues 245 to 314; that stretch reads KEKMLEMTIE…DLGLSLRKED (70 aa).

It belongs to the RNA polymerase alpha chain family. In terms of assembly, homodimer. The RNAP catalytic core consists of 2 alpha, 1 beta, 1 beta' and 1 omega subunit. When a sigma factor is associated with the core the holoenzyme is formed, which can initiate transcription.

It catalyses the reaction RNA(n) + a ribonucleoside 5'-triphosphate = RNA(n+1) + diphosphate. Functionally, DNA-dependent RNA polymerase catalyzes the transcription of DNA into RNA using the four ribonucleoside triphosphates as substrates. This Lactiplantibacillus plantarum (strain ATCC BAA-793 / NCIMB 8826 / WCFS1) (Lactobacillus plantarum) protein is DNA-directed RNA polymerase subunit alpha.